Here is a 464-residue protein sequence, read N- to C-terminus: ATP synthase subunit beta (464 aa).

Residue 153–160 participates in ATP binding; it reads GGAGVGKT.

Belongs to the ATPase alpha/beta chains family. As to quaternary structure, F-type ATPases have 2 components, CF(1) - the catalytic core - and CF(0) - the membrane proton channel. CF(1) has five subunits: alpha(3), beta(3), gamma(1), delta(1), epsilon(1). CF(0) has three main subunits: a(1), b(2) and c(9-12). The alpha and beta chains form an alternating ring which encloses part of the gamma chain. CF(1) is attached to CF(0) by a central stalk formed by the gamma and epsilon chains, while a peripheral stalk is formed by the delta and b chains.

The protein resides in the cell inner membrane. It carries out the reaction ATP + H2O + 4 H(+)(in) = ADP + phosphate + 5 H(+)(out). Produces ATP from ADP in the presence of a proton gradient across the membrane. The catalytic sites are hosted primarily by the beta subunits. The chain is ATP synthase subunit beta from Burkholderia vietnamiensis (strain G4 / LMG 22486) (Burkholderia cepacia (strain R1808)).